The chain runs to 98 residues: Hainantoxin-XVII.3 (98 aa).

The N-terminal stretch at 1 to 40 (MTTVGVSLFRRSPEKITMKIATFLGLSFLLIASYFLICEA) is a signal peptide. Positions 41–64 (QHPGFQELLILEENMRDPENSKER) are excised as a propeptide. Cystine bridges form between Cys-66–Cys-81, Cys-73–Cys-85, and Cys-80–Cys-95.

Belongs to the hainantoxin family. 17 subfamily. Expressed by the venom gland.

The protein resides in the secreted. Inhibits with low potency Kv1.2/KCNA2 and Kv1.3/KCNA3 voltage-gated potassium channels. This is Hainantoxin-XVII.3 from Cyriopagopus hainanus (Chinese bird spider).